Here is a 171-residue protein sequence, read N- to C-terminus: Ribosome maturation factor RimM (171 aa).

Positions Asn-94–Gly-168 constitute a PRC barrel domain.

This sequence belongs to the RimM family. As to quaternary structure, binds ribosomal protein uS19.

The protein resides in the cytoplasm. An accessory protein needed during the final step in the assembly of 30S ribosomal subunit, possibly for assembly of the head region. Essential for efficient processing of 16S rRNA. May be needed both before and after RbfA during the maturation of 16S rRNA. It has affinity for free ribosomal 30S subunits but not for 70S ribosomes. The chain is Ribosome maturation factor RimM from Anaplasma phagocytophilum (strain HZ).